We begin with the raw amino-acid sequence, 205 residues long: LexA repressor (205 aa).

A DNA-binding region (H-T-H motif) is located at residues 28–48 (RAEIAHKLGFRSANSAEEHLK). Active-site for autocatalytic cleavage activity residues include S122 and K159.

This sequence belongs to the peptidase S24 family. As to quaternary structure, homodimer.

The enzyme catalyses Hydrolysis of Ala-|-Gly bond in repressor LexA.. Functionally, represses a number of genes involved in the response to DNA damage (SOS response), including recA and lexA. In the presence of single-stranded DNA, RecA interacts with LexA causing an autocatalytic cleavage which disrupts the DNA-binding part of LexA, leading to derepression of the SOS regulon and eventually DNA repair. This chain is LexA repressor, found in Idiomarina loihiensis (strain ATCC BAA-735 / DSM 15497 / L2-TR).